We begin with the raw amino-acid sequence, 585 residues long: Arginine--tRNA ligase (585 aa).

A 'HIGH' region motif is present at residues 131–141 (ANPTGPMHVGH).

The protein belongs to the class-I aminoacyl-tRNA synthetase family. Monomer.

The protein resides in the cytoplasm. It catalyses the reaction tRNA(Arg) + L-arginine + ATP = L-arginyl-tRNA(Arg) + AMP + diphosphate. The polypeptide is Arginine--tRNA ligase (Rhizobium meliloti (strain 1021) (Ensifer meliloti)).